The sequence spans 69 residues: Conotoxin Eb6.9 (69 aa).

The first 17 residues, 1 to 17 (VLIIAVLFLTACQLTTA), serve as a signal peptide directing secretion. Residues 18 to 41 (ETYSRGRQKHRARRSTDKNSKWTR) constitute a propeptide that is removed on maturation. Intrachain disulfides connect Cys43–Cys57, Cys50–Cys61, and Cys56–Cys68.

The protein belongs to the conotoxin O1 superfamily. As to expression, expressed by the venom duct.

It is found in the secreted. The chain is Conotoxin Eb6.9 (E1) from Conus ebraeus (Hebrew cone).